We begin with the raw amino-acid sequence, 293 residues long: Ribosomal protein L11 methyltransferase (293 aa).

Residues T145, G166, D188, and N230 each contribute to the S-adenosyl-L-methionine site.

This sequence belongs to the methyltransferase superfamily. PrmA family.

It is found in the cytoplasm. The catalysed reaction is L-lysyl-[protein] + 3 S-adenosyl-L-methionine = N(6),N(6),N(6)-trimethyl-L-lysyl-[protein] + 3 S-adenosyl-L-homocysteine + 3 H(+). In terms of biological role, methylates ribosomal protein L11. The protein is Ribosomal protein L11 methyltransferase of Erwinia tasmaniensis (strain DSM 17950 / CFBP 7177 / CIP 109463 / NCPPB 4357 / Et1/99).